A 132-amino-acid chain; its full sequence is Small ribosomal subunit protein uS8 (132 aa).

The protein belongs to the universal ribosomal protein uS8 family. In terms of assembly, part of the 30S ribosomal subunit. Contacts proteins S5 and S12.

Functionally, one of the primary rRNA binding proteins, it binds directly to 16S rRNA central domain where it helps coordinate assembly of the platform of the 30S subunit. The protein is Small ribosomal subunit protein uS8 of Clostridium botulinum (strain 657 / Type Ba4).